The primary structure comprises 628 residues: Phosphomethylpyrimidine synthase (628 aa).

The segment covering 1 to 14 (MTISDIGSQATTHT) has biased composition (polar residues). The interval 1 to 37 (MTISDIGSQATTHTPVKASKADALKTPAHRSETDARF) is disordered. Positions 19-37 (SKADALKTPAHRSETDARF) are enriched in basic and acidic residues. Residues Asn-260, Met-289, Tyr-318, His-354, 374–376 (SRG), 415–418 (DGLR), and Glu-454 each bind substrate. Zn(2+) is bound at residue His-458. Tyr-481 lines the substrate pocket. His-522 is a Zn(2+) binding site. The [4Fe-4S] cluster site is built by Cys-602, Cys-605, and Cys-610.

It belongs to the ThiC family. In terms of assembly, homodimer. [4Fe-4S] cluster is required as a cofactor.

The catalysed reaction is 5-amino-1-(5-phospho-beta-D-ribosyl)imidazole + S-adenosyl-L-methionine = 4-amino-2-methyl-5-(phosphooxymethyl)pyrimidine + CO + 5'-deoxyadenosine + formate + L-methionine + 3 H(+). Its pathway is cofactor biosynthesis; thiamine diphosphate biosynthesis. Functionally, catalyzes the synthesis of the hydroxymethylpyrimidine phosphate (HMP-P) moiety of thiamine from aminoimidazole ribotide (AIR) in a radical S-adenosyl-L-methionine (SAM)-dependent reaction. The sequence is that of Phosphomethylpyrimidine synthase from Psychrobacter cryohalolentis (strain ATCC BAA-1226 / DSM 17306 / VKM B-2378 / K5).